The primary structure comprises 342 residues: tRNA N6-adenosine threonylcarbamoyltransferase (342 aa).

Residues His115 and His119 each coordinate Fe cation. Substrate contacts are provided by residues 138 to 142 (IISGG), Asp171, Gly184, Asp188, and Asn276. Residue Asp304 coordinates Fe cation.

This sequence belongs to the KAE1 / TsaD family. The cofactor is Fe(2+).

The protein resides in the cytoplasm. It catalyses the reaction L-threonylcarbamoyladenylate + adenosine(37) in tRNA = N(6)-L-threonylcarbamoyladenosine(37) in tRNA + AMP + H(+). Required for the formation of a threonylcarbamoyl group on adenosine at position 37 (t(6)A37) in tRNAs that read codons beginning with adenine. Is involved in the transfer of the threonylcarbamoyl moiety of threonylcarbamoyl-AMP (TC-AMP) to the N6 group of A37, together with TsaE and TsaB. TsaD likely plays a direct catalytic role in this reaction. The sequence is that of tRNA N6-adenosine threonylcarbamoyltransferase from Endomicrobium trichonymphae.